A 59-amino-acid chain; its full sequence is Embryonic testis differentiation protein homolog C (59 aa).

The tract at residues 1 to 22 (MDKELPKASPSEPALNIKKSGK) is disordered.

The sequence is that of Embryonic testis differentiation protein homolog C from Homo sapiens (Human).